The chain runs to 253 residues: Imidazole glycerol phosphate synthase subunit HisF (253 aa).

Active-site residues include Asp-11 and Asp-130.

This sequence belongs to the HisA/HisF family. Heterodimer of HisH and HisF.

Its subcellular location is the cytoplasm. The enzyme catalyses 5-[(5-phospho-1-deoxy-D-ribulos-1-ylimino)methylamino]-1-(5-phospho-beta-D-ribosyl)imidazole-4-carboxamide + L-glutamine = D-erythro-1-(imidazol-4-yl)glycerol 3-phosphate + 5-amino-1-(5-phospho-beta-D-ribosyl)imidazole-4-carboxamide + L-glutamate + H(+). The protein operates within amino-acid biosynthesis; L-histidine biosynthesis; L-histidine from 5-phospho-alpha-D-ribose 1-diphosphate: step 5/9. Its function is as follows. IGPS catalyzes the conversion of PRFAR and glutamine to IGP, AICAR and glutamate. The HisF subunit catalyzes the cyclization activity that produces IGP and AICAR from PRFAR using the ammonia provided by the HisH subunit. The protein is Imidazole glycerol phosphate synthase subunit HisF of Ruegeria pomeroyi (strain ATCC 700808 / DSM 15171 / DSS-3) (Silicibacter pomeroyi).